Reading from the N-terminus, the 424-residue chain is Vasopressin V1b receptor (424 aa).

A disordered region spans residues 1-22 (MDSGPLWDANPTPRGTLSAPNA). The Extracellular portion of the chain corresponds to 1 to 35 (MDSGPLWDANPTPRGTLSAPNATTPWLGRDEELAK). Over residues 13 to 22 (PRGTLSAPNA) the composition is skewed to polar residues. Asn21 carries N-linked (GlcNAc...) asparagine glycosylation. Residues 36–59 (VEIGVLATVLVLATGGNLAVLLTL) traverse the membrane as a helical segment. The Cytoplasmic portion of the chain corresponds to 60–71 (GQLGRKRSRMHL). Residues 72 to 93 (FVLHLALTDLAVALFQVLPQLL) traverse the membrane as a helical segment. Residues 94-108 (WDITYRFQGPDLLCR) are Extracellular-facing. Cys107 and Cys186 are disulfide-bonded. The helical transmembrane segment at 109-130 (AVKYLQVLSMFASTYMLLAMTL) threads the bilayer. The Cytoplasmic portion of the chain corresponds to 131-151 (DRYLAVCHPLRSLQQPGQSTY). A helical membrane pass occupies residues 152 to 173 (LLIAAPWLLAAIFSLPQVFIFS). Topologically, residues 174 to 201 (LREVIQGSGVLDCWADFGFPWGPRAYLT) are extracellular. A helical membrane pass occupies residues 202-222 (WTTLAIFVLPVTMLTACYSLI). At 223-283 (CHEICKNLKV…RAKIRTVKMT (61 aa)) the chain is on the cytoplasmic side. A helical membrane pass occupies residues 284–303 (FVIVLAYIACWAPFFSVQMW). At 304-321 (SVWDKNAPDEDSTNVAFT) the chain is on the extracellular side. A helical transmembrane segment spans residues 322-341 (ISMLLGNLNSCCNPWIYMGF). The Cytoplasmic portion of the chain corresponds to 342 to 424 (NSHLLPRPLR…GEGTAETIIF (83 aa)). The interval 398-417 (SGRPRPEESPRDLELADGEG) is disordered. Residues 401 to 411 (PRPEESPRDLE) show a composition bias toward basic and acidic residues.

The protein belongs to the G-protein coupled receptor 1 family. Vasopressin/oxytocin receptor subfamily.

Its subcellular location is the cell membrane. Functionally, receptor for arginine vasopressin. The activity of this receptor is mediated by G proteins which activate a phosphatidyl-inositol-calcium second messenger system. (Microbial infection) During SARS coronavirus-2/SARS-CoV-2 infection, may recognize and internalize the complex formed by AVP/Arg-vasopressin, SARS-CoV-2 spike protein and secreted ACE2 through DNM2/dynamin 2-dependent endocytosis. This Homo sapiens (Human) protein is Vasopressin V1b receptor.